Consider the following 470-residue polypeptide: 3-isopropylmalate dehydratase large subunit (470 aa).

3 residues coordinate [4Fe-4S] cluster: Cys349, Cys409, and Cys412.

Belongs to the aconitase/IPM isomerase family. LeuC type 1 subfamily. As to quaternary structure, heterodimer of LeuC and LeuD. It depends on [4Fe-4S] cluster as a cofactor.

It carries out the reaction (2R,3S)-3-isopropylmalate = (2S)-2-isopropylmalate. Its pathway is amino-acid biosynthesis; L-leucine biosynthesis; L-leucine from 3-methyl-2-oxobutanoate: step 2/4. In terms of biological role, catalyzes the isomerization between 2-isopropylmalate and 3-isopropylmalate, via the formation of 2-isopropylmaleate. The sequence is that of 3-isopropylmalate dehydratase large subunit from Afipia carboxidovorans (strain ATCC 49405 / DSM 1227 / KCTC 32145 / OM5) (Oligotropha carboxidovorans).